The primary structure comprises 649 residues: Glycerol-3-phosphate dehydrogenase, mitochondrial (649 aa).

An FAD-binding site is contributed by 69 to 97; it reads DVLIIGGGATGTGVAVDASTRGLNVCLLE.

It belongs to the FAD-dependent glycerol-3-phosphate dehydrogenase family. FAD serves as cofactor.

It is found in the mitochondrion. The enzyme catalyses a quinone + sn-glycerol 3-phosphate = dihydroxyacetone phosphate + a quinol. It participates in polyol metabolism; glycerol degradation via glycerol kinase pathway; glycerone phosphate from sn-glycerol 3-phosphate (anaerobic route): step 1/1. This is Glycerol-3-phosphate dehydrogenase, mitochondrial (gut2) from Schizosaccharomyces pombe (strain 972 / ATCC 24843) (Fission yeast).